The chain runs to 100 residues: Co-chaperonin GroES (100 aa).

Belongs to the GroES chaperonin family. Heptamer of 7 subunits arranged in a ring. Interacts with the chaperonin GroEL.

Its subcellular location is the cytoplasm. Together with the chaperonin GroEL, plays an essential role in assisting protein folding. The GroEL-GroES system forms a nano-cage that allows encapsulation of the non-native substrate proteins and provides a physical environment optimized to promote and accelerate protein folding. GroES binds to the apical surface of the GroEL ring, thereby capping the opening of the GroEL channel. The sequence is that of Co-chaperonin GroES from Mycolicibacterium vanbaalenii (strain DSM 7251 / JCM 13017 / BCRC 16820 / KCTC 9966 / NRRL B-24157 / PYR-1) (Mycobacterium vanbaalenii).